A 947-amino-acid chain; its full sequence is Serine-aspartate repeat-containing protein C (947 aa).

The signal sequence occupies residues 1-50; the sequence is MNNKKTATNRKGMIPNRLNKFSIRKYSVGTASILVGTTLIFGLSGHEAKA. The segment at 51–164 is disordered; the sequence is AEHTNGELNQ…STTPKTTTIK (114 aa). The interval 51 to 495 is ligand binding A region; that stretch reads AEHTNGELNQ…GSSTANGDQK (445 aa). The span at 56-71 shows a compositional bias: polar residues; it reads GELNQSKNETTAPSEN. Residues 72-83 show a composition bias toward basic and acidic residues; sequence KTTKKVDSRQLK. A compositionally biased stretch (polar residues) spans 84-155; it reads DNTQTATADQ…SNLTQAKDVS (72 aa). CNA-B domains lie at 496–606 and 607–717; these read KYNL…YKTP and KYSL…EEET. The segment at 678–927 is disordered; the sequence is TQTGTNTTED…NNSNNGTLFG (250 aa). 2 stretches are compositionally biased toward acidic residues: residues 685-695 and 712-886; these read TEDDKDADGGE and YYEE…DSDS. Positions 910–914 match the LPXTG sorting signal motif; sequence LPETG. The span at 912 to 927 shows a compositional bias: low complexity; sequence ETGSENNNSNNGTLFG. At Thr913 the chain carries Pentaglycyl murein peptidoglycan amidated threonine. A propeptide spans 914 to 947 (removed by sortase); it reads GSENNNSNNGTLFGGLFAALGSLLLFGRRKKQNK.

The protein belongs to the serine-aspartate repeat-containing protein (SDr) family. As to quaternary structure, homodimerizes; via N2-Domain. Interacts with host NRXN1; this interaction mediates bacterial attachment to host cells.

The protein localises to the secreted. Its subcellular location is the cell wall. Cell surface-associated calcium-binding protein which plays an important role in adhesion and pathogenesis. Mediates interactions with components of the extracellular matrix such as host NRXN1 to promote bacterial adhesion. The chain is Serine-aspartate repeat-containing protein C (sdrC) from Staphylococcus aureus (strain COL).